Reading from the N-terminus, the 1191-residue chain is Laminin subunit gamma-2 (1191 aa).

The signal sequence occupies residues 1 to 21; the sequence is MPALWLSCCLGVALLLPAAQA. Cystine bridges form between Cys-28-Cys-37, Cys-30-Cys-53, Cys-56-Cys-65, Cys-68-Cys-81, Cys-84-Cys-96, Cys-86-Cys-102, Cys-104-Cys-113, Cys-116-Cys-128, Cys-139-Cys-150, Cys-141-Cys-155, Cys-157-Cys-166, and Cys-169-Cys-184. 3 consecutive Laminin EGF-like domains span residues 28 to 83, 84 to 130, and 139 to 186; these read CDCN…RCLP, CNCH…GCTR, and CDCD…GCTQ. Residues 187-196 enclose the Laminin EGF-like 4; first part domain; it reads CFCYGHSASC. The Laminin IV type A domain maps to 213–381; that stretch reads QDVDGWKAVQ…SGAPAPWVER (169 aa). Asn-342 and Asn-362 each carry an N-linked (GlcNAc...) asparagine glycan. The 34-residue stretch at 382–415 folds into the Laminin EGF-like 4; second part domain; the sequence is CVCPAGYKGQFCQECASGYKRDSARLGPFGACVP. Laminin EGF-like domains follow at residues 416–461, 462–516, and 517–572; these read CNCQ…SCKP, CPCH…PCQR, and CQCN…KCRA. Disulfide bonds link Cys-462/Cys-470, Cys-464/Cys-481, Cys-484/Cys-493, Cys-496/Cys-514, Cys-517/Cys-531, Cys-519/Cys-538, Cys-541/Cys-550, Cys-553/Cys-570, Cys-573/Cys-585, Cys-575/Cys-591, and Cys-593/Cys-602. An N-linked (GlcNAc...) asparagine glycan is attached at Asn-526. The Laminin EGF-like 8; truncated domain maps to 573–602; sequence CNCSPMGSEPGECRGDGSCVCKPGFGGLNC. Positions 586–588 match the Cell attachment site motif; it reads RGD. A domain II and I region spans residues 603–1191; it reads DHAALTSCPA…CYNTQALEQQ (589 aa). Coiled coils occupy residues 612–710 and 759–786; these read ACYN…IRAL and LAQE…ETED. O-linked (Xyl...) (chondroitin sulfate) serine glycosylation occurs at Ser-805. N-linked (GlcNAc...) asparagine glycosylation is present at Asn-941. Positions 946-996 form a coiled coil; sequence EVENILKNLREFDLQVEDRKAEAEEAMKRLSSISQKVADASDKTQQAETAL. Asn-1032 is a glycosylation site (N-linked (GlcNAc...) asparagine). Residues 1139–1178 are a coiled coil; that stretch reads LMSDLEERVRRQRNHLHLLETSIDGILADVKNLENIRDNL.

In terms of assembly, laminin is a complex glycoprotein, consisting of three different polypeptide chains (alpha, beta, gamma), which are bound to each other by disulfide bonds into a cross-shaped molecule comprising one long and three short arms with globules at each end. Gamma-2 is a subunit of laminin-5 (laminin-332 or epiligrin/kalinin/nicein). Binds to fibulin-1, fibulin-1c, fibulin-2 and nidogen. O-glycosylated; contains chondroitin sulfate (CS). Epithelial cells of many tissues, particularly high levels in tongue, hair follicles and kidney. Basement membranes of the collecting tubules of kidney and pancreas.

The protein resides in the secreted. It is found in the extracellular space. It localises to the extracellular matrix. Its subcellular location is the basement membrane. Its function is as follows. Binding to cells via a high affinity receptor, laminin is thought to mediate the attachment, migration and organization of cells into tissues during embryonic development by interacting with other extracellular matrix components. The protein is Laminin subunit gamma-2 (Lamc2) of Mus musculus (Mouse).